A 418-amino-acid chain; its full sequence is Tyrosine--tRNA ligase 1 (418 aa).

Tyr-34 contacts L-tyrosine. The 'HIGH' region signature appears at Pro-39–His-48. Residues Tyr-169 and Gln-173 each coordinate L-tyrosine. The 'KMSKS' region signature appears at Lys-229–Ser-233. Lys-232 is an ATP binding site. The S4 RNA-binding domain maps to Leu-352–Tyr-418.

The protein belongs to the class-I aminoacyl-tRNA synthetase family. TyrS type 1 subfamily. Homodimer.

Its subcellular location is the cytoplasm. The enzyme catalyses tRNA(Tyr) + L-tyrosine + ATP = L-tyrosyl-tRNA(Tyr) + AMP + diphosphate + H(+). Its function is as follows. Catalyzes the attachment of tyrosine to tRNA(Tyr) in a two-step reaction: tyrosine is first activated by ATP to form Tyr-AMP and then transferred to the acceptor end of tRNA(Tyr). The sequence is that of Tyrosine--tRNA ligase 1 from Streptococcus thermophilus (strain CNRZ 1066).